The primary structure comprises 509 residues: Phytase A (509 aa).

Positions 1–15 (MFLLMVPLFSYLAAA) are cleaved as a signal peptide. Cys-27 and Cys-36 are oxidised to a cystine. The 1D-myo-inositol hexakisphosphate site is built by Gln-46, Tyr-47, Arg-75, His-76, Arg-79, Thr-82, and Arg-164. Cystine bridges form between Cys-65/Cys-444, Cys-216/Cys-507, Cys-266/Cys-295, and Cys-478/Cys-486. His-76 serves as the catalytic Nucleophile. N-linked (GlcNAc...) asparagine glycans are attached at residues Asn-171 and Asn-208. Residue Lys-314 coordinates 1D-myo-inositol hexakisphosphate. N-linked (GlcNAc...) asparagine glycans are attached at residues Asn-348, Asn-352, and Asn-367. 1D-myo-inositol hexakisphosphate-binding residues include His-376 and Asp-377. N-linked (GlcNAc...) asparagine glycosylation occurs at Asn-401.

Belongs to the histidine acid phosphatase family. In terms of assembly, monomer.

It localises to the secreted. The catalysed reaction is 1D-myo-inositol hexakisphosphate + H2O = 1D-myo-inositol 1,2,4,5,6-pentakisphosphate + phosphate. It catalyses the reaction 1D-myo-inositol 1,2,4,5,6-pentakisphosphate + H2O = 1D-myo-inositol 1,2,5,6-tetrakisphosphate + phosphate. It carries out the reaction 1D-myo-inositol 1,2,5,6-tetrakisphosphate + H2O = 1D-myo-inositol 1,2,6-trisphosphate + phosphate. The enzyme catalyses 1D-myo-inositol 1,2,6-trisphosphate + H2O = 1D-myo-inositol 1,2-bisphosphate + phosphate. The catalysed reaction is 1D-myo-inositol 1,2-bisphosphate + H2O = 1D-myo-inositol 2-phosphate + phosphate. Its function is as follows. Catalyzes the phosphate monoester hydrolysis of phytic acid (myo-inositol hexakisphosphate), which results in the stepwise formation of myo-inositol pentakis-, tetrakis-, tris-, bis-, and monophosphates, as well as the liberation of inorganic phosphate. Myo-inositol 2-monophosphate is the end product. Is also able to dephosphorylate the classic acid phosphatase substrate p-nitrophenyl phosphate. This chain is Phytase A (pht-1), found in Neurospora crassa (strain ATCC 24698 / 74-OR23-1A / CBS 708.71 / DSM 1257 / FGSC 987).